A 498-amino-acid polypeptide reads, in one-letter code: MRINPTTSGPRVSTLGKKFQGRIAQIIGPVLXVAFSTGKMPNIYNSLVVXGRDTAGQEINVTCEVQQLLGNNRVRAVAMSATDGLTRGMEVIDTGAPLSVPVGGATLGRIFNVLGEPVDNLGPVDTRTTSPIHRSAPAFTQLDTKLSIFETGIKVVDLLAPYRRGGKIGLFGGAGVGKTVLIMELINNIAKAHGGVSVFGGVGERTREGNDLYMEMKESGVINEENIAESKVALVYGQMNEPPGARMRVGLTALTMAEYFRDVNEQDVLLFIDNIFRFVQAGSEVSALLGRMPSAVGYQPTLSTEMGSLQERITSTKEGSITSIQAVYVPADDLTDPAPATTFAHLDATTVLSRGLAAKGIYPAVDPLDSTSTMLQPRIVGEEHYETAQRVKQTLQRYKELQDIIAILGLDELSEEDRLTVARARKIERFLSQPFFVAEVFTGSPGKYVGLAETIRGFQLILSGELDSFPEQAFYLVGNIDEATAKAMNLEVESKLKK.

Position 172-179 (172-179 (GGAGVGKT)) interacts with ATP.

The protein belongs to the ATPase alpha/beta chains family. In terms of assembly, F-type ATPases have 2 components, CF(1) - the catalytic core - and CF(0) - the membrane proton channel. CF(1) has five subunits: alpha(3), beta(3), gamma(1), delta(1), epsilon(1). CF(0) has four main subunits: a(1), b(1), b'(1) and c(9-12).

It localises to the plastid. The protein resides in the chloroplast thylakoid membrane. It carries out the reaction ATP + H2O + 4 H(+)(in) = ADP + phosphate + 5 H(+)(out). Functionally, produces ATP from ADP in the presence of a proton gradient across the membrane. The catalytic sites are hosted primarily by the beta subunits. The polypeptide is ATP synthase subunit beta, chloroplastic (Nymphaea odorata (White water lily)).